Reading from the N-terminus, the 234-residue chain is Putative N-acetylmannosamine-6-phosphate 2-epimerase (234 aa).

Belongs to the NanE family.

The enzyme catalyses an N-acyl-D-glucosamine 6-phosphate = an N-acyl-D-mannosamine 6-phosphate. Its pathway is amino-sugar metabolism; N-acetylneuraminate degradation; D-fructose 6-phosphate from N-acetylneuraminate: step 3/5. Functionally, converts N-acetylmannosamine-6-phosphate (ManNAc-6-P) to N-acetylglucosamine-6-phosphate (GlcNAc-6-P). The protein is Putative N-acetylmannosamine-6-phosphate 2-epimerase of Klebsiella pneumoniae (strain 342).